Here is a 316-residue protein sequence, read N- to C-terminus: Pantothenate kinase (316 aa).

95-102 contributes to the ATP binding site; the sequence is GSVAVGKS.

Belongs to the prokaryotic pantothenate kinase family.

The protein resides in the cytoplasm. The catalysed reaction is (R)-pantothenate + ATP = (R)-4'-phosphopantothenate + ADP + H(+). It participates in cofactor biosynthesis; coenzyme A biosynthesis; CoA from (R)-pantothenate: step 1/5. The chain is Pantothenate kinase from Klebsiella pneumoniae subsp. pneumoniae (strain ATCC 700721 / MGH 78578).